The following is a 544-amino-acid chain: Chaperonin GroEL (544 aa).

Residues 30-33 (TLGP), Lys-51, 87-91 (DGTTT), Gly-415, 481-483 (DAL), and Asp-497 contribute to the ATP site.

Belongs to the chaperonin (HSP60) family. Forms a cylinder of 14 subunits composed of two heptameric rings stacked back-to-back. Interacts with the co-chaperonin GroES.

It localises to the cytoplasm. The enzyme catalyses ATP + H2O + a folded polypeptide = ADP + phosphate + an unfolded polypeptide.. Functionally, together with its co-chaperonin GroES, plays an essential role in assisting protein folding. The GroEL-GroES system forms a nano-cage that allows encapsulation of the non-native substrate proteins and provides a physical environment optimized to promote and accelerate protein folding. In Chlamydia felis (strain Fe/C-56) (Chlamydophila felis), this protein is Chaperonin GroEL.